The sequence spans 654 residues: Endoplasmic reticulum chaperone BiP (654 aa).

A signal peptide spans 1–18 (MKLSLVAAMLLLLSAARA). Positions 1 to 80 (MKLSLVAAML…EGERLIGDAA (80 aa)) are required for interaction with ELAPOR1. 36-39 (GTTY) contacts ATP. A Phosphoserine modification is found at Ser86. Lys96 contributes to the ATP binding site. At Lys125 the chain carries N6-acetyllysine. A nucleotide-binding (NBD) region spans residues 125–280 (KPYIQVDIGG…KKKTGKDVRK (156 aa)). Position 160 is a 3'-nitrotyrosine (Tyr160). At Lys213 the chain carries N6-acetyllysine. An ATP-binding site is contributed by 227–229 (GGT). Lys271 bears the N6-acetyllysine mark. ATP is bound at residue 293 to 300 (EKAKRALS). At Lys326 the chain carries N6-acetyllysine. Lys352 participates in a covalent cross-link: Glycyl lysine isopeptide (Lys-Gly) (interchain with G-Cter in SUMO2). Position 353 is an N6-acetyllysine; alternate (Lys353). Residue Lys353 forms a Glycyl lysine isopeptide (Lys-Gly) (interchain with G-Cter in SUMO1); alternate linkage. 364–367 (GSTR) contributes to the ATP binding site. Residues 409–419 (QDTGDLALLDV) form an interdomain linker region. Residues 420–500 (CPLTLGIETV…PRGVPQIEVT (81 aa)) are substrate-binding (SBD). Lys447 carries the N6-succinyllysine modification. Omega-N-methylarginine is present on Arg492. Thr518 bears the O-AMP-threonine; alternate mark. Thr518 bears the Phosphothreonine; alternate mark. Lys585 is modified (N6,N6,N6-trimethyllysine; by METTL21A; in vitro). Lys585 is modified (N6,N6-dimethyllysine; alternate). An N6-methyllysine; alternate modification is found at Lys585. At Lys591 the chain carries N6-methyllysine. Residues 633–654 (KLYGSAGPPPTGEEDTAEKDEL) are disordered. Phosphothreonine is present on residues Thr643 and Thr648. Over residues 644–654 (GEEDTAEKDEL) the composition is skewed to acidic residues. Positions 651–654 (KDEL) match the Prevents secretion from ER motif.

This sequence belongs to the heat shock protein 70 family. Monomer and homooligomer; homooligomerization via the interdomain linker inactivates the chaperone activity and acts as a storage of HSPA5/BiP molecules. Interacts with DNAJC1 (via J domain). Component of an EIF2 complex at least composed of CELF1/CUGBP1, CALR, CALR3, EIF2S1, EIF2S2, HSP90B1 and HSPA5. Part of a large chaperone multiprotein complex comprising DNAJB11, HSP90B1, HSPA5, HYOU, PDIA2, PDIA4, PDIA6, PPIB, SDF2L1, UGGT1 and very small amounts of ERP29, but not, or at very low levels, CALR nor CANX. Interacts with TMEM132A and TRIM21. May form a complex with ERLEC1, OS9, SEL1L and SYVN1. Interacts with DNAJC10. Interacts with DNAJB9/ERdj4; leading to recruit HSPA5/BiP to ERN1/IRE1. Interacts with ERN1/IRE1 (via luminal domain); the interaction takes place following interaction with DNAJB9/ERdj4 and leads to inactivate ERN1/IRE1, the interaction also competitively inhibits ERN1 interaction with MANF. Interacts directly with MANF (via SAP domain); the interaction inhibits ATP binding to HSPA5/BiP and subsequent nucleotide exchange. Interacts with EIF2AK3/PERK (via luminal domain); interaction leads to inactivate EIF2AK3/PERK. Interacts with MX1. Interacts with METTL23. Interacts with CEMIP; the interaction induces calcium leakage from the endoplasmic reticulum and cell migration. Interacts with PCSK4 form; the interaction takes place in the endoplasmic reticulum. Interacts with CIPC. Interacts with CCDC88B (via C-terminus); the interaction opposes ERN1-mediated JNK activation, protecting against apoptosis. Interacts with INPP5K; necessary for INPP5K localization at the endoplasmic reticulum. Interacts with MANF; the interaction is direct. Interacts with LOXL2; leading to activate the ERN1/IRE1-XBP1 pathway of the unfolded protein response. Interacts with CLU under stressed condition; interaction increases CLU protein stability; facilitates its retrotranslocation and redistribution to the mitochondria; cooperatively suppress stress-induced apoptosis by stabilizing mitochondrial membrane integrity. Interacts with CCDC47. Interacts with CLN3. Interacts with ELAPOR1; may regulate the function of HSPA5 in apoptosis and cell proliferation. Interacts with CASP7. Interacts with ILDR2; the interaction stabilizes ILDR2 expression. Interacts with ADAM7. In terms of processing, in unstressed cells, AMPylation at Thr-518 by FICD inactivates the chaperome activity: AMPylated form is locked in a relatively inert state and only weakly stimulated by J domain-containing proteins. In response to endoplasmic reticulum stress, de-AMPylation by the same protein, FICD, restores the chaperone activity.

The protein resides in the endoplasmic reticulum lumen. It is found in the melanosome. The protein localises to the cytoplasm. It localises to the cell surface. The enzyme catalyses ATP + H2O = ADP + phosphate + H(+). Its activity is regulated as follows. The chaperone activity is regulated by ATP-induced allosteric coupling of the nucleotide-binding (NBD) and substrate-binding (SBD) domains. In the ADP-bound and nucleotide-free (apo) states, the two domains have little interaction. In contrast, in the ATP-bound state the two domains are tightly coupled, which results in drastically accelerated kinetics in both binding and release of polypeptide substrates. J domain-containing co-chaperones (DNAJB9/ERdj4 or DNAJC10/ERdj5) stimulate the ATPase activity and are required for efficient substrate recognition by HSPA5/BiP. Homooligomerization inactivates participating HSPA5/BiP protomers and probably act as reservoirs to store HSPA5/BiP molecules when they are not needed by the cell. Endoplasmic reticulum chaperone that plays a key role in protein folding and quality control in the endoplasmic reticulum lumen. Involved in the correct folding of proteins and degradation of misfolded proteins via its interaction with DNAJC10/ERdj5, probably to facilitate the release of DNAJC10/ERdj5 from its substrate. Acts as a key repressor of the EIF2AK3/PERK and ERN1/IRE1-mediated unfolded protein response (UPR). In the unstressed endoplasmic reticulum, recruited by DNAJB9/ERdj4 to the luminal region of ERN1/IRE1, leading to disrupt the dimerization of ERN1/IRE1, thereby inactivating ERN1/IRE1. Also binds and inactivates EIF2AK3/PERK in unstressed cells. Accumulation of misfolded protein in the endoplasmic reticulum causes release of HSPA5/BiP from ERN1/IRE1 and EIF2AK3/PERK, allowing their homodimerization and subsequent activation. Plays an auxiliary role in post-translational transport of small presecretory proteins across endoplasmic reticulum (ER). May function as an allosteric modulator for SEC61 channel-forming translocon complex, likely cooperating with SEC62 to enable the productive insertion of these precursors into SEC61 channel. Appears to specifically regulate translocation of precursors having inhibitory residues in their mature region that weaken channel gating. May also play a role in apoptosis and cell proliferation. In Pongo abelii (Sumatran orangutan), this protein is Endoplasmic reticulum chaperone BiP.